The chain runs to 316 residues: Solute carrier family 25 member 32 (316 aa).

3 Solcar repeats span residues 20-109 (HVRY…IKSY), 118-209 (LEPL…LKLK), and 222-306 (LSTA…VSHF). 6 helical membrane passes run 26 to 46 (LVAG…LDLV), 89 to 106 (VWGA…YNAI), 123 to 143 (YLVS…PLWV), 185 to 203 (GFVP…FMAY), 227 to 243 (YISV…AATY), and 281 to 300 (GIAP…FVVY).

It belongs to the mitochondrial carrier (TC 2.A.29) family.

Its subcellular location is the mitochondrion inner membrane. It carries out the reaction FAD(in) = FAD(out). Functionally, facilitates flavin adenine dinucleotide (FAD) translocation across the mitochondrial inner membrane into the mitochondrial matrix where it acts as a redox cofactor to assist flavoenzyme activities in fundamental metabolic processes including fatty acid beta-oxidation, amino acid and choline metabolism as well as mitochondrial electron transportation. In particular, provides FAD to DLD dehydrogenase of the glycine cleavage system, part of mitochondrial one-carbon metabolic pathway involved in neural tube closure in early embryogenesis. The polypeptide is Solute carrier family 25 member 32 (Mus musculus (Mouse)).